The primary structure comprises 285 residues: N(G),N(G)-dimethylarginine dimethylaminohydrolase 1 (285 aa).

Ala2 carries the N-acetylalanine modification. Leu30, Asp73, Glu78, Asp79, Arg98, and Arg145 together coordinate substrate. The active-site Proton donor is His173. Cys222 carries the S-nitrosocysteine modification. Substrate is bound at residue Val268. Cys274 carries the post-translational modification S-nitrosocysteine. Cys274 acts as the Nucleophile in catalysis. Cys274 contacts Zn(2+).

As to quaternary structure, monomer. In terms of tissue distribution, widely distributed, highest concentrations found in brain, brain cortex and kidney (at protein level).

The enzyme catalyses N(omega),N(omega)-dimethyl-L-arginine + H2O = dimethylamine + L-citrulline. It carries out the reaction N(omega)-methyl-L-arginine + H2O = L-citrulline + methylamine. Its activity is regulated as follows. Copurifies with a tightly bound zinc ion. Activated by release of zinc. His and other agents that promote the release of bound zinc ions activate the enzyme (in vitro). Inhibited by S-nitrosylation. Zinc protects the protein against S-nitrosylation. Functionally, hydrolyzes N(G),N(G)-dimethyl-L-arginine (ADMA) and N(G)-monomethyl-L-arginine (MMA) which act as inhibitors of NOS. Has therefore a role in the regulation of nitric oxide generation. This is N(G),N(G)-dimethylarginine dimethylaminohydrolase 1 (DDAH1) from Bos taurus (Bovine).